The sequence spans 180 residues: NADH-quinone oxidoreductase subunit B (180 aa).

Cysteine 59, cysteine 60, cysteine 124, and cysteine 154 together coordinate [4Fe-4S] cluster.

It belongs to the complex I 20 kDa subunit family. In terms of assembly, NDH-1 is composed of 14 different subunits. Subunits NuoB, C, D, E, F, and G constitute the peripheral sector of the complex. [4Fe-4S] cluster is required as a cofactor.

Its subcellular location is the cell inner membrane. The enzyme catalyses a quinone + NADH + 5 H(+)(in) = a quinol + NAD(+) + 4 H(+)(out). In terms of biological role, NDH-1 shuttles electrons from NADH, via FMN and iron-sulfur (Fe-S) centers, to quinones in the respiratory chain. The immediate electron acceptor for the enzyme in this species is believed to be ubiquinone. Couples the redox reaction to proton translocation (for every two electrons transferred, four hydrogen ions are translocated across the cytoplasmic membrane), and thus conserves the redox energy in a proton gradient. This chain is NADH-quinone oxidoreductase subunit B, found in Beijerinckia indica subsp. indica (strain ATCC 9039 / DSM 1715 / NCIMB 8712).